A 157-amino-acid polypeptide reads, in one-letter code: Eukaryotic translation initiation factor 5A-1 (157 aa).

At Ser2 the chain carries N-acetylserine. At Ser2 the chain carries Phosphoserine. Phosphothreonine is present on residues Thr7 and Thr10. Lys51 is modified (hypusine). Ser74 carries the phosphoserine modification. Residue Lys86 forms a Glycyl lysine isopeptide (Lys-Gly) (interchain with G-Cter in ubiquitin) linkage.

It belongs to the eIF-5A family. In terms of assembly, homodimer. Binds to 80S ribosomes. Actively translating ribosomes show mutually exclusive binding of eIF5a (HYP2 or ANB1) and EFT1/eEF2. Interacts with DYS1 and LIA1. Post-translationally, lys-51 undergoes hypusination, a unique post-translational modification that consists in the addition of a butylamino group from spermidine to lysine side chain, leading to the formation of the unusual amino acid hypusine. eIF-5As are the only known proteins to undergo this modification, which is essential for their function.

The protein localises to the cytoplasm. Translation factor that promotes translation elongation and termination, particularly upon ribosome stalling at specific amino acid sequence contexts. Binds between the exit (E) and peptidyl (P) site of the ribosome and promotes rescue of stalled ribosome: specifically required for efficient translation of polyproline-containing peptides as well as other motifs that stall the ribosome. Acts as a ribosome quality control (RQC) cofactor by joining the RQC complex to facilitate peptidyl transfer during CAT tailing step. Involved in actin dynamics and cell cycle progression, mRNA decay and probably in a pathway involved in stress response and maintenance of cell wall integrity. The protein is Eukaryotic translation initiation factor 5A-1 (HYP2) of Saccharomyces cerevisiae (strain ATCC 204508 / S288c) (Baker's yeast).